The chain runs to 189 residues: Transcription factor FapR (189 aa).

The protein belongs to the FapR family.

In terms of biological role, transcriptional factor involved in regulation of membrane lipid biosynthesis by repressing genes involved in fatty acid and phospholipid metabolism. This is Transcription factor FapR from Exiguobacterium sibiricum (strain DSM 17290 / CCUG 55495 / CIP 109462 / JCM 13490 / 255-15).